The primary structure comprises 111 residues: uncharacterized protein (111 aa).

Transmembrane regions (helical) follow at residues 27–47 and 80–100; these read IIVL…GYKF and IFTG…ISAI.

Its subcellular location is the membrane. This is an uncharacterized protein from Acanthamoeba polyphaga (Amoeba).